The following is a 694-amino-acid chain: GRB2-associated-binding protein 1 (694 aa).

At Ser-2 the chain carries N-acetylserine. The region spanning 5–116 is the PH domain; that stretch reads EVVCSGWLRK…WVRCICDICG (112 aa). Positions 194–203 are enriched in basic and acidic residues; it reads PEPTRTHADS. Residues 194-231 are disordered; it reads PEPTRTHADSAKSTSSETDCNDNVPSHKNPASSQSKHG. Residues 204–230 are compositionally biased toward polar residues; that stretch reads AKSTSSETDCNDNVPSHKNPASSQSKH. Residues Ser-251, Ser-253, Ser-266, and Ser-304 each carry the phosphoserine modification. The disordered stretch occupies residues 309–378; sequence IPPTPGNTYQ…TDSSYCIPTA (70 aa). A compositionally biased stretch (polar residues) spans 358 to 374; sequence DTCSITRTASDTDSSYC. At Thr-387 the chain carries Phosphothreonine. Phosphoserine occurs at positions 402 and 454. 2 disordered regions span residues 492–532 and 560–656; these read PAHM…VKPA and DSSR…ADER. A compositionally biased stretch (polar residues) spans 594-611; it reads PNLSSEDSNLFGSNSLDG. A Phosphotyrosine modification is found at Tyr-627. Phosphothreonine is present on Thr-638. Ser-651 bears the Phosphoserine mark. Tyr-659 is modified (phosphotyrosine). The disordered stretch occupies residues 668–694; it reads LALKSTREAWTDGRQSTESETPAKNVK. The segment covering 672–684 has biased composition (basic and acidic residues); it reads STREAWTDGRQST. Ser-683 bears the Phosphoserine mark. Residues 685 to 694 are compositionally biased toward polar residues; sequence ESETPAKNVK.

Belongs to the GAB family. In terms of assembly, identified in a complex containing FRS2, GRB2, GAB1, PIK3R1 and SOS1. Forms a tripartite complex containing GAB1, METTL13 and SPRY2. Within the complex interacts with METTL13. Interacts with GRB2 and with other SH2-containing proteins. Interacts with phosphorylated LAT2. Interacts with PTPRJ. Interacts (phosphorylated) with PTPN11. Interacts with HCK. Post-translationally, phosphorylated in response to FGFR1 activation. Phosphorylated on tyrosine residue(s) by the epidermal growth factor receptor (EGFR) and the insulin receptor (INSR). Tyrosine phosphorylation of GAB1 mediates interaction with several proteins that contain SH2 domains. Phosphorylated on tyrosine residues by HCK upon IL6 signaling.

Functionally, adapter protein that plays a role in intracellular signaling cascades triggered by activated receptor-type kinases. Plays a role in FGFR1 signaling. Probably involved in signaling by the epidermal growth factor receptor (EGFR) and the insulin receptor (INSR). Involved in the MET/HGF-signaling pathway. The chain is GRB2-associated-binding protein 1 (GAB1) from Bos taurus (Bovine).